Reading from the N-terminus, the 306-residue chain is 4-diphosphocytidyl-2-C-methyl-D-erythritol kinase (306 aa).

The active site involves lysine 11. Position 98–108 (98–108 (PIAGGMGGGSA)) interacts with ATP. The active site involves aspartate 140.

The protein belongs to the GHMP kinase family. IspE subfamily.

The enzyme catalyses 4-CDP-2-C-methyl-D-erythritol + ATP = 4-CDP-2-C-methyl-D-erythritol 2-phosphate + ADP + H(+). It functions in the pathway isoprenoid biosynthesis; isopentenyl diphosphate biosynthesis via DXP pathway; isopentenyl diphosphate from 1-deoxy-D-xylulose 5-phosphate: step 3/6. In terms of biological role, catalyzes the phosphorylation of the position 2 hydroxy group of 4-diphosphocytidyl-2C-methyl-D-erythritol. The polypeptide is 4-diphosphocytidyl-2-C-methyl-D-erythritol kinase (Leifsonia xyli subsp. xyli (strain CTCB07)).